Consider the following 388-residue polypeptide: GTPase Obg (388 aa).

An Obg domain is found at 1–159; sequence MKFVDEAVIR…RSLKLELLLL (159 aa). An OBG-type G domain is found at 160 to 333; the sequence is ADVGLLGMPN…LALKLLDYIA (174 aa). GTP is bound by residues 166–173, 191–195, 213–216, 283–286, and 314–316; these read GMPNAGKS, FTTLV, DIPG, NKTD, and SAY. Residues Ser173 and Thr193 each coordinate Mg(2+).

This sequence belongs to the TRAFAC class OBG-HflX-like GTPase superfamily. OBG GTPase family. As to quaternary structure, monomer. Requires Mg(2+) as cofactor.

The protein resides in the cytoplasm. Its function is as follows. An essential GTPase which binds GTP, GDP and possibly (p)ppGpp with moderate affinity, with high nucleotide exchange rates and a fairly low GTP hydrolysis rate. Plays a role in control of the cell cycle, stress response, ribosome biogenesis and in those bacteria that undergo differentiation, in morphogenesis control. This chain is GTPase Obg, found in Shewanella putrefaciens (strain CN-32 / ATCC BAA-453).